Consider the following 631-residue polypeptide: Probable potassium transport system protein Kup 1 (631 aa).

Helical transmembrane passes span 17–37, 55–75, 101–121, 140–160, 166–186, 217–237, 249–269, 277–297, 338–358, 370–390, 395–415, and 420–440; these read LALG…LYAL, LSLI…MIIF, PLFY…GMLT, LYPY…SLQA, IGYL…ILGI, FLLG…ADIG, FFIA…NLIV, PFFM…ATVA, IYVP…CLAF, IAVN…AVSI, TFNV…FLGA, and FITG…IMYS.

The protein belongs to the HAK/KUP transporter (TC 2.A.72) family.

It is found in the cell inner membrane. The enzyme catalyses K(+)(in) + H(+)(in) = K(+)(out) + H(+)(out). Its function is as follows. Transport of potassium into the cell. Likely operates as a K(+):H(+) symporter. This chain is Probable potassium transport system protein Kup 1, found in Legionella pneumophila (strain Corby).